The primary structure comprises 297 residues: Juvenile hormone acid O-methyltransferase (297 aa).

It belongs to the methyltransferase superfamily. In terms of tissue distribution, predominantly expressed in corpora allata. Also expressed at low level in testis.

The enzyme catalyses (2E,6E)-farnesoate + S-adenosyl-L-methionine = methyl (2E,6E)-farnesoate + S-adenosyl-L-homocysteine. The catalysed reaction is juvenile hormone III carboxylate + S-adenosyl-L-methionine = juvenile hormone III + S-adenosyl-L-homocysteine. In terms of biological role, O-methyltransferase that transfers a methyl group from S-adenosyl-L-methionine (SAM) to the carboxyl group of juvenile hormone acids to produce active juvenile hormones in the corpora allata, the last step during juvenile hormone biosynthesis. Also able to methylate farnesoate to methyl farnesoate. The protein is Juvenile hormone acid O-methyltransferase of Drosophila melanogaster (Fruit fly).